Consider the following 396-residue polypeptide: MVSITLKTNRIFRSCLNLATNLKFSITLFIIICIVSAIGTIIPQDKPKEFYMNTYSLKVLGMPLWKIIQLLSLEKIFYSNFYLILLLCLSFSLFFCSLKSQFPYLRTSRIIKLNNNNPPTSPLHESKKIKYNNIASKNDSSCVQLVSQGYKIYTFDKNLDKAGPLLIHLSLILILLGSAIHAFNDFIAQEMIPIYEVSHIQNVISSGRISKIPQTISLKASAFTVEHENEKVVKQFITNLAMLNSKGEVLKQGLVSVNHPLVYKQVYIFQMDWKLFGIRVNYGKNKIYEFPVQKIEANNEQQWSCTIPAKNQSKLILIFKNMSDEFYVYDNNQNFLKIGKINTPQLIRNTYFTVISKISGTGLQIKKDSSINIVYTGFLLLIIGLVINHKGSKKRT.

The next 3 membrane-spanning stretches (helical) occupy residues 22–42 (LKFS…GTII), 79–99 (SNFY…CSLK), and 162–182 (AGPL…AIHA).

This sequence belongs to the Ccs1/CcsB family. May interact with CcsA.

It localises to the plastid. The protein resides in the chloroplast thylakoid membrane. Its function is as follows. Required during biogenesis of c-type cytochromes (cytochrome c6 and cytochrome f) at the step of heme attachment. The chain is Cytochrome c biogenesis protein Ccs1 from Cyanidium caldarium (Red alga).